The chain runs to 222 residues: Ribose-5-phosphate isomerase A (222 aa).

Substrate-binding positions include 28-31 (TGST), 81-84 (DGAD), and 94-97 (KGGG). The Proton acceptor role is filled by E103. K121 provides a ligand contact to substrate.

This sequence belongs to the ribose 5-phosphate isomerase family. Homodimer.

The enzyme catalyses aldehydo-D-ribose 5-phosphate = D-ribulose 5-phosphate. Its pathway is carbohydrate degradation; pentose phosphate pathway; D-ribose 5-phosphate from D-ribulose 5-phosphate (non-oxidative stage): step 1/1. Functionally, catalyzes the reversible conversion of ribose-5-phosphate to ribulose 5-phosphate. In Azoarcus sp. (strain BH72), this protein is Ribose-5-phosphate isomerase A.